The following is a 273-amino-acid chain: Large ribosomal subunit protein uL2 (273 aa).

Disordered stretches follow at residues 34-54 (LEKK…TRHI) and 223-273 (VAMN…RRRK).

It belongs to the universal ribosomal protein uL2 family. In terms of assembly, part of the 50S ribosomal subunit. Forms a bridge to the 30S subunit in the 70S ribosome.

One of the primary rRNA binding proteins. Required for association of the 30S and 50S subunits to form the 70S ribosome, for tRNA binding and peptide bond formation. It has been suggested to have peptidyltransferase activity; this is somewhat controversial. Makes several contacts with the 16S rRNA in the 70S ribosome. The chain is Large ribosomal subunit protein uL2 from Pseudomonas aeruginosa (strain LESB58).